Reading from the N-terminus, the 339-residue chain is Quinolinate synthase (339 aa).

2 residues coordinate iminosuccinate: histidine 63 and serine 81. Cysteine 126 contacts [4Fe-4S] cluster. Iminosuccinate is bound by residues 152-154 (YVN) and serine 169. A [4Fe-4S] cluster-binding site is contributed by cysteine 211. Iminosuccinate is bound by residues 237 to 239 (HPE) and threonine 254. Cysteine 297 serves as a coordination point for [4Fe-4S] cluster.

It belongs to the quinolinate synthase family. Type 2 subfamily. It depends on [4Fe-4S] cluster as a cofactor.

It localises to the cytoplasm. It catalyses the reaction iminosuccinate + dihydroxyacetone phosphate = quinolinate + phosphate + 2 H2O + H(+). The protein operates within cofactor biosynthesis; NAD(+) biosynthesis; quinolinate from iminoaspartate: step 1/1. Catalyzes the condensation of iminoaspartate with dihydroxyacetone phosphate to form quinolinate. This is Quinolinate synthase from Xylella fastidiosa (strain 9a5c).